We begin with the raw amino-acid sequence, 1197 residues long: Protein timeless homolog (1197 aa).

The required for homodimerization and for interaction with CRY1 and CHEK1 stretch occupies residues 1 to 309; it reads MDLYMMNCEL…GLHNLQNYSS (309 aa). Ser-281 carries the post-translational modification Phosphoserine. Disordered stretches follow at residues 647 to 674 and 943 to 1002; these read STPL…EELQ and RKKL…SAEN. Over residues 656 to 673 the composition is skewed to acidic residues; it reads PEEGDAEEEEEEEEEEEL. A DNA-binding domain region spans residues 810–949; sequence SHRAPLWSPE…KKRRKKLAPS (140 aa). Acidic residues predominate over residues 963–985; that stretch reads QEDPEEEDEHLPEDESEDEESEE. Low complexity predominate over residues 986 to 999; that stretch reads GLPSGQGQGSSSLS. Positions 997-1095 are interaction with PARP1; the sequence is SLSAENLGES…TQLRRVAASL (99 aa). Phosphoserine is present on residues Ser-1071 and Ser-1084. Positions 1079–1197 are required for nuclear localization; sequence IPAKLSSTQL…KRFQIEDEDD (119 aa). Thr-1086 is subject to Phosphothreonine. Residues 1088–1197 are disordered; that stretch reads LRRVAASLSQ…KRFQIEDEDD (110 aa). 2 stretches are compositionally biased toward acidic residues: residues 1099–1109 and 1143–1153; these read ENEEEREEEPE and TEEEATGEEEW. Residue Ser-1165 is modified to Phosphoserine.

It belongs to the timeless family. As to quaternary structure, monomer. Homodimer or homomultimer. Component of the circadian core oscillator, which includes the CRY proteins, CLOCK or NPAS2, ARTNL/BMAL1 or ARTNL2/BMAL2, CSKN1D and/or CSNK1E, TIMELESS, and the PER proteins. Interacts directly with PER2; the interaction with PER2 is via its second PAS domain. Interacts directly with PER1 and PER3. Interacts with CRY1. Interacts with CRY2. Interacts with CHEK1, ATR and ATRIP. Interacts with CLSPN. Interacts (via N-terminus) with TIPIN. The TIMELESS-TIPIN heterodimer binds preferably to guanine-rich quadruplex-forming (G4) DNA structures. Associates with the MCM2-7 complex. Interacts with DNA polymerases alpha, delta and epsilon. Interacts with DDX11; this interaction increases recruitment of both proteins onto chromatin in response to replication stress induction by hydroxyurea. Interacts with PARP1; interaction is direct and independent of poly-ADP-ribose. In terms of tissue distribution, predominantly and robustly expressed in proliferative organs (spleen, thymus, intestine and testis) compared to those more differentiated such as kidney and liver (at protein level). Expressed in all tissues examined including brain, heart, lung, liver, skeletal muscle, kidney, placenta, pancreas, spleen, thymus and testis. Strongly expressed in the suprachiasmatic nucleus (SCN) and pars tuberalis, moderately in the cingulate cortex, pyrimidal cell layer of the piriform cortex, periventricular part of the caudate putamen, and granular layer of the cerebellum, and weakly in the cerebral cortex, gyrus dentatus, hippocampus and thalamic nuclei. In embryonic kidney, expression is highest in regions of active ureteric bud cell branching.

The protein localises to the nucleus. It is found in the chromosome. Functionally, plays an important role in the control of DNA replication, maintenance of replication fork stability, maintenance of genome stability throughout normal DNA replication, DNA repair and in the regulation of the circadian clock. Required to stabilize replication forks during DNA replication by forming a complex with TIPIN: this complex regulates DNA replication processes under both normal and stress conditions, stabilizes replication forks and influences both CHEK1 phosphorylation and the intra-S phase checkpoint in response to genotoxic stress. During DNA replication, inhibits the CMG complex ATPase activity and activates DNA polymerases catalytic activities, coupling DNA unwinding and DNA synthesis. TIMELESS promotes TIPIN nuclear localization. Plays a role in maintaining processive DNA replication past genomic guanine-rich DNA sequences that form G-quadruplex (G4) structures, possibly together with DDX1. Involved in cell survival after DNA damage or replication stress by promoting DNA repair. In response to double-strand breaks (DSBs), accumulates at DNA damage sites and promotes homologous recombination repair via its interaction with PARP1. May be specifically required for the ATR-CHEK1 pathway in the replication checkpoint induced by hydroxyurea or ultraviolet light. Involved in the determination of period length and in the DNA damage-dependent phase advancing of the circadian clock. Negatively regulates CLOCK|NPAS2-ARTNL/BMAL1|ARTNL2/BMAL2-induced transactivation of PER1 possibly via translocation of PER1 into the nucleus. May also play an important role in epithelial cell morphogenesis and formation of branching tubules. The polypeptide is Protein timeless homolog (Mus musculus (Mouse)).